The chain runs to 296 residues: D-alanine--D-alanine ligase (296 aa).

The 191-residue stretch at 103 to 293 (KEILMHHRMP…FDSFVKRIIE (191 aa)) folds into the ATP-grasp domain. 129-180 (ISFPVAVKPSSGGSSIATFKVKSIQELKHAYEEASKYGEVMIEQWVTGKEIT) is an ATP binding site. Asp247, Glu260, and Asn262 together coordinate Mg(2+).

The protein belongs to the D-alanine--D-alanine ligase family. Requires Mg(2+) as cofactor. Mn(2+) serves as cofactor.

It localises to the cytoplasm. It carries out the reaction 2 D-alanine + ATP = D-alanyl-D-alanine + ADP + phosphate + H(+). The protein operates within cell wall biogenesis; peptidoglycan biosynthesis. Functionally, cell wall formation. This is D-alanine--D-alanine ligase from Francisella tularensis subsp. novicida (strain U112).